The sequence spans 373 residues: tRNA (guanine(26)-N(2))-dimethyltransferase (373 aa).

In terms of domain architecture, Trm1 methyltransferase spans 2–365 (KIISEGETKL…AELSDLVVLI (364 aa)). R35, R66, D86, D113, and A114 together coordinate S-adenosyl-L-methionine.

This sequence belongs to the class I-like SAM-binding methyltransferase superfamily. Trm1 family.

The enzyme catalyses guanosine(26) in tRNA + 2 S-adenosyl-L-methionine = N(2)-dimethylguanosine(26) in tRNA + 2 S-adenosyl-L-homocysteine + 2 H(+). Dimethylates a single guanine residue at position 26 of a number of tRNAs using S-adenosyl-L-methionine as donor of the methyl groups. In Methanococcus maripaludis (Methanococcus deltae), this protein is tRNA (guanine(26)-N(2))-dimethyltransferase.